A 435-amino-acid polypeptide reads, in one-letter code: 3-phosphoshikimate 1-carboxyvinyltransferase (435 aa).

3-phosphoshikimate-binding residues include Lys22, Ser23, and Arg27. Lys22 is a phosphoenolpyruvate binding site. The phosphoenolpyruvate site is built by Gly95 and Arg123. 3-phosphoshikimate contacts are provided by Ser168, Gln170, Asp319, and Lys346. Position 170 (Gln170) interacts with phosphoenolpyruvate. Asp319 functions as the Proton acceptor in the catalytic mechanism. The phosphoenolpyruvate site is built by Arg350 and Arg393.

It belongs to the EPSP synthase family. In terms of assembly, monomer.

The protein localises to the cytoplasm. The catalysed reaction is 3-phosphoshikimate + phosphoenolpyruvate = 5-O-(1-carboxyvinyl)-3-phosphoshikimate + phosphate. It participates in metabolic intermediate biosynthesis; chorismate biosynthesis; chorismate from D-erythrose 4-phosphate and phosphoenolpyruvate: step 6/7. Catalyzes the transfer of the enolpyruvyl moiety of phosphoenolpyruvate (PEP) to the 5-hydroxyl of shikimate-3-phosphate (S3P) to produce enolpyruvyl shikimate-3-phosphate and inorganic phosphate. This chain is 3-phosphoshikimate 1-carboxyvinyltransferase, found in Chloroflexus aurantiacus (strain ATCC 29364 / DSM 637 / Y-400-fl).